The following is a 273-amino-acid chain: HMP-PP phosphatase (273 aa).

Aspartate 8 functions as the Nucleophile in the catalytic mechanism. The Mg(2+) site is built by aspartate 8, aspartate 10, and aspartate 212.

Belongs to the HAD-like hydrolase superfamily. Cof family. It depends on Mg(2+) as a cofactor.

The enzyme catalyses 4-amino-2-methyl-5-(diphosphooxymethyl)pyrimidine + H2O = 4-amino-2-methyl-5-(phosphooxymethyl)pyrimidine + phosphate + H(+). Catalyzes the hydrolysis of 4-amino-2-methyl-5-hydroxymethylpyrimidine pyrophosphate (HMP-PP) to 4-amino-2-methyl-5-hydroxymethylpyrimidine phosphate (HMP-P). The polypeptide is HMP-PP phosphatase (Yersinia pseudotuberculosis serotype I (strain IP32953)).